The sequence spans 532 residues: Probable 1,4-beta-D-glucan cellobiohydrolase B (532 aa).

Positions 1–26 (MLASTFSYRMYKTALILAALLGSGQA) are cleaved as a signal peptide. Residues 27–461 (QQVGTSQAEV…SNIKVGPIGS (435 aa)) are catalytic. Glu-238 (nucleophile) is an active-site residue. Glu-243 functions as the Proton donor in the catalytic mechanism. The N-linked (GlcNAc...) asparagine glycan is linked to Asn-296. The interval 462–495 (TFNSGGSNPGGGTTTTTTTQPTTTTTTAGNPGGT) is disordered. Positions 462–496 (TFNSGGSNPGGGTTTTTTTQPTTTTTTAGNPGGTG) are thr-rich linker. The span at 475-490 (TTTTTTQPTTTTTTAG) shows a compositional bias: low complexity. Residues 496-532 (GVAQHYGQCGGIGWTGPTTCASPYTCQKLNDYYSQCL) form the CBM1 domain. Disulfide bonds link Cys-504–Cys-521 and Cys-515–Cys-531.

Belongs to the glycosyl hydrolase 7 (cellulase C) family.

The protein resides in the secreted. It carries out the reaction Hydrolysis of (1-&gt;4)-beta-D-glucosidic linkages in cellulose and cellotetraose, releasing cellobiose from the non-reducing ends of the chains.. Functionally, the biological conversion of cellulose to glucose generally requires three types of hydrolytic enzymes: (1) Endoglucanases which cut internal beta-1,4-glucosidic bonds; (2) Exocellobiohydrolases that cut the disaccharide cellobiose from the non-reducing end of the cellulose polymer chain; (3) Beta-1,4-glucosidases which hydrolyze the cellobiose and other short cello-oligosaccharides to glucose. The polypeptide is Probable 1,4-beta-D-glucan cellobiohydrolase B (cbhB) (Aspergillus fumigatus (strain CBS 144.89 / FGSC A1163 / CEA10) (Neosartorya fumigata)).